Reading from the N-terminus, the 479-residue chain is UDP-N-acetylmuramate--L-alanine ligase (479 aa).

127 to 133 (GTHGKTT) is a binding site for ATP.

Belongs to the MurCDEF family.

The protein resides in the cytoplasm. It catalyses the reaction UDP-N-acetyl-alpha-D-muramate + L-alanine + ATP = UDP-N-acetyl-alpha-D-muramoyl-L-alanine + ADP + phosphate + H(+). Its pathway is cell wall biogenesis; peptidoglycan biosynthesis. Cell wall formation. The chain is UDP-N-acetylmuramate--L-alanine ligase from Shewanella denitrificans (strain OS217 / ATCC BAA-1090 / DSM 15013).